Consider the following 802-residue polypeptide: MKMKWLISVIILFVFIFPQNLVFAGEDKNEGVKVVRDNFGVPHLYAKNKKDLYEAYGYVMAKDRLFQLEMFRRGNEGTVSEIFGEDYLSKDEQSRRDGYSNKEIKKMIDGLDRQPRELIAKFAEGISRYVNEALKDPDDKLSKEFHEYQFLPQKWTSTDVVRVYMVSMTYLWIITRELKNAEILAKLEHEYGTEVSRKMFDDLVWKNDPSAPTSIVSEGKPKRESSSQSLQKLSSAVIKASEKVGKERENFVQSSEELGLPLKIGSNAAIVGSEKSATGNALLFSGPQVGFVAPGFLYEVGLHAPGFDMEGSGFIGYPFIMFGANNHFALSATAGYGNVTDIFEEKLNTKNSSQYLYKGKWRDMEKRKESFTVKGDNGEKKTVEKIYYRTVHGPVISRDETNKVAYSKYVSFRGTEAQSMSAYMKANWAKNLKEFENAASEYTMSLNWYYADKKGDIAYYHVGRYPVRNNKIDERIPTPGTGEYEWKGFIPFKENPHVINPKNGYVVNWNNKPSKEWVNGEYSYYWGEDNRVQQYINGMEARGKVTLEDINEINYTASFAQLRANLFKPLLIDVLDKNKSTNGNYTYLIEKLEEWNNLKEDENKDGYYDAGIAAFFDEWWNNLHDKLFMDELGDFYGITKEITDHRYGASLAYKNISKESTNYKWVNVDQEKIIMESTNEVLAKLQSEKGLKAEKWRMPIKTMTFGEKSLIGIPHGYGSMTPIIEMNRGSENHYIEMTPKGPSGFNITPPGQIGFVKKDGTISDHYDDQLVMFAEWKFKPYLFNKKDIYKAATNVSALNMSK.

A signal peptide spans Met-1–Glu-26. Position 177 (Glu-177) interacts with Ca(2+). The propeptide at Ser-235–Gly-265 is spacer peptide. Ser-266 (nucleophile) is an active-site residue. Asp-341 is a Ca(2+) binding site.

It belongs to the peptidase S45 family. In terms of assembly, heterodimer of an alpha subunit and a beta subunit processed from the same precursor. It depends on Ca(2+) as a cofactor.

Its subcellular location is the secreted. It catalyses the reaction a penicillin + H2O = 6-aminopenicillanate + a carboxylate. The protein is Penicillin G acylase (pac) of Rhizobium viscosum (Arthrobacter viscosus).